The sequence spans 414 residues: Esterase FrsA (414 aa).

The protein belongs to the FrsA family.

The catalysed reaction is a carboxylic ester + H2O = an alcohol + a carboxylate + H(+). Catalyzes the hydrolysis of esters. The protein is Esterase FrsA of Klebsiella pneumoniae subsp. pneumoniae (strain ATCC 700721 / MGH 78578).